The following is a 522-amino-acid chain: Nuclear pore glycoprotein p62 (522 aa).

Ser2 carries the N-acetylserine modification. 5 consecutive repeat copies span residues 6–7 (FG), 44–45 (FG), 76–77 (FG), 114–115 (FG), and 142–143 (FG). Residues 6–143 (FGGTGAPTGG…GTAPTGFVFG (138 aa)) are 5 X 2 AA repeats of F-G. A compositionally biased stretch (polar residues) spans 169-179 (SGFNIGSAGNS). 2 disordered regions span residues 169-215 (SGFN…ATIT) and 260-288 (APGA…SSTT). Composition is skewed to low complexity over residues 180 to 215 (AQPT…ATIT) and 262 to 288 (GAAS…SSTT). The required for centrosome localization stretch occupies residues 328-458 (MTYAQLESLI…QDLKDIIEHL (131 aa)). The stretch at 328-458 (MTYAQLESLI…QDLKDIIEHL (131 aa)) forms a coiled coil. Thr373 is a glycosylation site (O-linked (GlcNAc) threonine). Phosphoserine is present on residues Ser408 and Ser418. O-linked (GlcNAc) serine glycosylation occurs at Ser468.

This sequence belongs to the nucleoporin NSP1/NUP62 family. In terms of assembly, component of the p62 complex, a complex at least composed of NUP62, NUP54, and NUP58. Interacts with NUP88. Interacts with NUTF2. Interacts with HIKESHI. Interacts with OSBPL8. Interacts with CAPG. Interacts with SAS6 and TUBG1 at the centrosome. Interacts with MCM3AP isoform GANP. (Microbial infection) Interacts with Epstein-barr virus BGLF4; this interaction allows BGLF4 nuclear entry. O-glycosylated. Contains about 10 N-acetylglucosamine side chain sites predicted for the entire protein, among which only one in the C-terminal. Post-translationally, the inner channel of the NPC has a different redox environment from the cytoplasm and allows the formation of interchain disulfide bonds between some nucleoporins, the significant increase of these linkages upon oxidative stress reduces the permeability of the NPC.

The protein resides in the nucleus. The protein localises to the nuclear pore complex. It is found in the cytoplasm. It localises to the cytoskeleton. Its subcellular location is the spindle pole. The protein resides in the nucleus envelope. The protein localises to the microtubule organizing center. It is found in the centrosome. Functionally, essential component of the nuclear pore complex. The N-terminal is probably involved in nucleocytoplasmic transport. The C-terminal is involved in protein-protein interaction probably via coiled-coil formation, promotes its association with centrosomes and may function in anchorage of p62 to the pore complex. Plays a role in mitotic cell cycle progression by regulating centrosome segregation, centriole maturation and spindle orientation. It might be involved in protein recruitment to the centrosome after nuclear breakdown. This is Nuclear pore glycoprotein p62 (NUP62) from Homo sapiens (Human).